The following is a 242-amino-acid chain: 1-(5-phosphoribosyl)-5-[(5-phosphoribosylamino)methylideneamino] imidazole-4-carboxamide isomerase (242 aa).

The active-site Proton acceptor is D10. The active-site Proton donor is D132.

Belongs to the HisA/HisF family.

Its subcellular location is the cytoplasm. The enzyme catalyses 1-(5-phospho-beta-D-ribosyl)-5-[(5-phospho-beta-D-ribosylamino)methylideneamino]imidazole-4-carboxamide = 5-[(5-phospho-1-deoxy-D-ribulos-1-ylimino)methylamino]-1-(5-phospho-beta-D-ribosyl)imidazole-4-carboxamide. It participates in amino-acid biosynthesis; L-histidine biosynthesis; L-histidine from 5-phospho-alpha-D-ribose 1-diphosphate: step 4/9. The protein is 1-(5-phosphoribosyl)-5-[(5-phosphoribosylamino)methylideneamino] imidazole-4-carboxamide isomerase of Methanothrix thermoacetophila (strain DSM 6194 / JCM 14653 / NBRC 101360 / PT) (Methanosaeta thermophila).